We begin with the raw amino-acid sequence, 687 residues long: Pentatricopeptide repeat-containing protein At3g09060 (687 aa).

18 PPR repeats span residues 42–76 (SAVV…ECKC), 77–107 (DEDV…MREI), 113–147 (AIRS…GVAP), 148–182 (NLQT…GFKP), 183–217 (DVFS…GVAP), 218–253 (DVTC…SVYP), 254–288 (NVKT…EREK), 289–323 (DLYT…KASI), 324–358 (DVVT…NSVN), 359–392 (IVSY…GYAA), 393–427 (DKTT…GGHL), 428–462 (DVYA…GVEL), 463–497 (NSHV…GCRP), 498–532 (TVVS…GWKP), 533–567 (DLKT…GLET), 568–602 (DVMM…NCTA), 603–637 (NLVT…GLQP), and 638–672 (DIIS…GIFP).

This sequence belongs to the PPR family. P subfamily.

This is Pentatricopeptide repeat-containing protein At3g09060 from Arabidopsis thaliana (Mouse-ear cress).